A 187-amino-acid polypeptide reads, in one-letter code: 1,6-anhydro-N-acetylmuramyl-L-alanine amidase AmpD (187 aa).

In terms of domain architecture, N-acetylmuramoyl-L-alanine amidase spans 29–167; the sequence is TLLVVHNISL…APERKTDPGP (139 aa). H34 lines the Zn(2+) pocket. Residue E116 is the Proton acceptor of the active site. H154 and D164 together coordinate Zn(2+).

The protein belongs to the N-acetylmuramoyl-L-alanine amidase 2 family. Zn(2+) serves as cofactor.

It localises to the cytoplasm. The enzyme catalyses Hydrolyzes the link between N-acetylmuramoyl residues and L-amino acid residues in certain cell-wall glycopeptides.. In terms of biological role, involved in cell wall peptidoglycan recycling. Specifically cleaves the amide bond between the lactyl group of N-acetylmuramic acid and the alpha-amino group of the L-alanine in degradation products containing an anhydro N-acetylmuramyl moiety. The chain is 1,6-anhydro-N-acetylmuramyl-L-alanine amidase AmpD from Enterobacter cloacae.